Consider the following 316-residue polypeptide: Transaldolase (316 aa).

The active-site Schiff-base intermediate with substrate is lysine 132.

The protein belongs to the transaldolase family. Type 1 subfamily. In terms of assembly, homodimer.

It is found in the cytoplasm. It catalyses the reaction D-sedoheptulose 7-phosphate + D-glyceraldehyde 3-phosphate = D-erythrose 4-phosphate + beta-D-fructose 6-phosphate. The protein operates within carbohydrate degradation; pentose phosphate pathway; D-glyceraldehyde 3-phosphate and beta-D-fructose 6-phosphate from D-ribose 5-phosphate and D-xylulose 5-phosphate (non-oxidative stage): step 2/3. Transaldolase is important for the balance of metabolites in the pentose-phosphate pathway. The sequence is that of Transaldolase from Vibrio vulnificus (strain CMCP6).